Consider the following 410-residue polypeptide: Probable serine/threonine-protein kinase PBL8 (410 aa).

Basic and acidic residues predominate over residues 1 to 10 (MGNCGTRDEA). The interval 1 to 45 (MGNCGTRDEAAVFTPQAQAQQLQKKHSRSVSDLSDPSTPRFRDDS) is disordered. Glycine 2 is lipidated: N-myristoyl glycine. Cysteine 4 carries the S-palmitoyl cysteine lipid modification. Threonine 58 is subject to Phosphothreonine. The 282-residue stretch at 69-350 (FRPDYILGEG…DVVETLEPLQ (282 aa)) folds into the Protein kinase domain. ATP is bound by residues 75–83 (LGEGGFGTV) and lysine 104. A Phosphotyrosine modification is found at tyrosine 149. Residue aspartate 199 is the Proton acceptor of the active site. Phosphoserine is present on residues serine 203 and serine 233. Residues threonine 234 and threonine 239 each carry the phosphothreonine modification. The residue at position 247 (tyrosine 247) is a Phosphotyrosine.

This sequence belongs to the protein kinase superfamily. Ser/Thr protein kinase family. As to quaternary structure, interacts with the Xanthomonas campestris effector XopAC/AvrAC.

Its subcellular location is the cell membrane. The catalysed reaction is L-seryl-[protein] + ATP = O-phospho-L-seryl-[protein] + ADP + H(+). It catalyses the reaction L-threonyl-[protein] + ATP = O-phospho-L-threonyl-[protein] + ADP + H(+). In terms of biological role, may be involved in plant defense signaling. The protein is Probable serine/threonine-protein kinase PBL8 of Arabidopsis thaliana (Mouse-ear cress).